Here is a 334-residue protein sequence, read N- to C-terminus: MKKNQFLKESDITAESVFFMKRRQVLKALGISAAALSLPHAAHADLLSWFKGNDRPPAPAGKPLEFSKPAAWQNNLPLTPADKVSGYNNFYEFGLDKADPAANAGSLKTDTWTLKISGEVAKPLTLDHDDLTRRFPLEERIYRMRCVEAWSMVVPWIGFPLHKLLALAEPTSNAKYVAFETIYAPEQMPGLQDRFIGGGLKYPYVEGLRLDEAMHPLTLMTVGVYGKALPPQNGAPVRLIVPWKYGFKGIKSIVSIKLTREHPPTTWNLAAPDEYGFYANVNPHVDHPRWSQATERFIGSGGILDVQRQPTLLFNGYADQVASLYRGLDLRENF.

The tat-type signal signal peptide spans 1-44; it reads MKKNQFLKESDITAESVFFMKRRQVLKALGISAAALSLPHAAHA. Residues asparagine 88, 91–92, cysteine 146, threonine 181, asparagine 233, arginine 238, and 249–251 contribute to the Mo-molybdopterin site; these read YE and GIK.

The protein belongs to the MsrP family. Heterodimer of a catalytic subunit (MsrP) and a heme-binding subunit (MsrQ). Mo-molybdopterin serves as cofactor. Predicted to be exported by the Tat system. The position of the signal peptide cleavage has not been experimentally proven.

It is found in the periplasm. The enzyme catalyses L-methionyl-[protein] + a quinone + H2O = L-methionyl-(S)-S-oxide-[protein] + a quinol. It carries out the reaction L-methionyl-[protein] + a quinone + H2O = L-methionyl-(R)-S-oxide-[protein] + a quinol. Functionally, part of the MsrPQ system that repairs oxidized periplasmic proteins containing methionine sulfoxide residues (Met-O), using respiratory chain electrons. Thus protects these proteins from oxidative-stress damage caused by reactive species of oxygen and chlorine generated by the host defense mechanisms. MsrPQ is essential for the maintenance of envelope integrity under bleach stress, rescuing a wide series of structurally unrelated periplasmic proteins from methionine oxidation, including the primary periplasmic chaperone SurA and the lipoprotein Pal. The catalytic subunit MsrP is non-stereospecific, being able to reduce both (R-) and (S-) diastereoisomers of methionine sulfoxide. The sequence is that of Protein-methionine-sulfoxide reductase catalytic subunit MsrP from Shigella dysenteriae serotype 1 (strain Sd197).